A 447-amino-acid polypeptide reads, in one-letter code: Sensor protein VanSB (447 aa).

The next 2 helical transmembrane spans lie at valine 10–alanine 30 and glycine 137–phenylalanine 155. An HAMP domain is found at arginine 157 to alanine 208. The 216-residue stretch at alanine 230 to serine 445 folds into the Histidine kinase domain. Histidine 233 bears the Phosphohistidine; by autocatalysis mark.

It is found in the cell membrane. It carries out the reaction ATP + protein L-histidine = ADP + protein N-phospho-L-histidine.. Member of the two-component regulatory system VanSB/VanRB. Activates the transcription of vanSB, vanYB and vanW in response to vancomycin which results in vancomycin resistance. VanSB may activate VanRB by phosphorylation. May also act as a phospho-VanRB phosphatase. The chain is Sensor protein VanSB (vanSB) from Enterococcus faecalis (strain ATCC 700802 / V583).